Consider the following 630-residue polypeptide: Putative adenylate cyclase regulatory protein (630 aa).

The RING-type zinc finger occupies 10 to 46 (CAVCREPWAEGALELFPCRHVFCTVCVVERWRCPSCQ). LRR repeat units lie at residues 184–206 (FLVH…CRLK), 207–230 (TLEA…CALP), 231–251 (QLTS…RCIH), 255–277 (KLKV…GGMR), 278–301 (SLEK…CKFS), 302–324 (NLRE…KNLI), 325–347 (NLKV…ERLV), 348–370 (NLDK…ANLS), 371–393 (NLKE…QDLN), 394–416 (NLEV…KNLS), 417–439 (KMRE…ETLK), 440–462 (GLEE…WSLH), 463–485 (HLRV…EGIT), 486–508 (GLEE…WNLR), 509–531 (NVCV…QCLT), 532–554 (GLEE…GNLR), 555–577 (NLKC…DRLV), and 578–599 (NLEK…MELM).

In terms of biological role, may interact with adenylate cyclase to regulate its activity. Its function is as follows. May be involved in the postranscriptional regulation of genes in VSG expression sites. This Trypanosoma equiperdum protein is Putative adenylate cyclase regulatory protein (ESAG8C).